The chain runs to 342 residues: tRNA N6-adenosine threonylcarbamoyltransferase (342 aa).

Positions 111 and 115 each coordinate Fe cation. Residues 133 to 137 (VVSGG), Asp166, Gly179, Asp183, and Asn273 each bind substrate. Asp301 provides a ligand contact to Fe cation.

Belongs to the KAE1 / TsaD family. The cofactor is Fe(2+).

The protein resides in the cytoplasm. It catalyses the reaction L-threonylcarbamoyladenylate + adenosine(37) in tRNA = N(6)-L-threonylcarbamoyladenosine(37) in tRNA + AMP + H(+). Its function is as follows. Required for the formation of a threonylcarbamoyl group on adenosine at position 37 (t(6)A37) in tRNAs that read codons beginning with adenine. Is involved in the transfer of the threonylcarbamoyl moiety of threonylcarbamoyl-AMP (TC-AMP) to the N6 group of A37, together with TsaE and TsaB. TsaD likely plays a direct catalytic role in this reaction. The polypeptide is tRNA N6-adenosine threonylcarbamoyltransferase (Trichlorobacter lovleyi (strain ATCC BAA-1151 / DSM 17278 / SZ) (Geobacter lovleyi)).